The chain runs to 177 residues: Chorismate pyruvate-lyase (177 aa).

Substrate-binding residues include methionine 37, arginine 79, leucine 117, and glutamate 159.

The protein belongs to the UbiC family. In terms of assembly, monomer.

The protein resides in the cytoplasm. It carries out the reaction chorismate = 4-hydroxybenzoate + pyruvate. It participates in cofactor biosynthesis; ubiquinone biosynthesis. In terms of biological role, removes the pyruvyl group from chorismate, with concomitant aromatization of the ring, to provide 4-hydroxybenzoate (4HB) for the ubiquinone pathway. This Sodalis glossinidius (strain morsitans) protein is Chorismate pyruvate-lyase.